The primary structure comprises 258 residues: MKITKLEKKKRLYLMELDNGDKCYITEDTIVRFMLSRDKVISEEELKEIQDFAQFSYGKNLALYHLSFKARTEKEVREYLKKYDIDENIVSQVIANLKEDKWINDGQYAYAIINTNQLSGDKGPYVLTQKLAQKGISKSTIEENLKEFDFSEVAQRVANKLLKKYEGKLPARALQDKIIQNLTNKGFSYSDAKIAFDDLDSQVEQETTQELIFKELDKQYTKYARKYEGYELKQRLTQVLARKGYDFSDIASALREYL.

It belongs to the RecX family.

It localises to the cytoplasm. In terms of biological role, modulates RecA activity. In Streptococcus pneumoniae (strain 70585), this protein is Regulatory protein RecX.